The sequence spans 46 residues: uncharacterized protein (46 aa).

It is found in the mitochondrion. This is an uncharacterized protein from Saccharomyces cerevisiae (strain ATCC 204508 / S288c) (Baker's yeast).